The chain runs to 166 residues: NADH-quinone oxidoreductase subunit A (166 aa).

3 helical membrane passes run 16–36 (FAVF…GAYF), 68–88 (FYLV…LYAW), and 98–118 (IGFI…FYLV). The interval 141–166 (RYASSHPQDISQELSVAGSQQANESR) is disordered.

It belongs to the complex I subunit 3 family. As to quaternary structure, NDH-1 is composed of 13 different subunits. Subunits NuoA, H, J, K, L, M, N constitute the membrane sector of the complex.

It localises to the cell inner membrane. It carries out the reaction a quinone + NADH + 5 H(+)(in) = a quinol + NAD(+) + 4 H(+)(out). In terms of biological role, NDH-1 shuttles electrons from NADH, via FMN and iron-sulfur (Fe-S) centers, to quinones in the respiratory chain. The immediate electron acceptor for the enzyme in this species is believed to be ubiquinone. Couples the redox reaction to proton translocation (for every two electrons transferred, four hydrogen ions are translocated across the cytoplasmic membrane), and thus conserves the redox energy in a proton gradient. The polypeptide is NADH-quinone oxidoreductase subunit A (Yersinia pseudotuberculosis serotype IB (strain PB1/+)).